Consider the following 63-residue polypeptide: Large ribosomal subunit protein bL28 (63 aa).

The protein belongs to the bacterial ribosomal protein bL28 family.

The protein is Large ribosomal subunit protein bL28 of Clostridium perfringens (strain SM101 / Type A).